Reading from the N-terminus, the 345-residue chain is HTH-type transcriptional regulator reg1 (345 aa).

An HTH lacI-type domain is found at 1 to 58 (MTTRLADIAAQAGVSEATVSRVLNGKPGVAATTRQSVLAALDVLGYERPVRLRRRSAG). The H-T-H motif DNA-binding region spans 5 to 24 (LADIAAQAGVSEATVSRVLN).

Functionally, transcription repressor involved in control of expression of alpha-amylase and chitinase genes and of actinorhodin production. The protein is HTH-type transcriptional regulator reg1 (reg1) of Streptomyces lividans.